Consider the following 59-residue polypeptide: Conotoxin Sr5.4 (59 aa).

An N-terminal signal peptide occupies residues 1–22; that stretch reads MRCLPVFVILLLLIASAPSVDA. Residues 23-44 constitute a propeptide that is removed on maturation; it reads QLKTKDDVPLASFHDNAKGTQH.

The protein belongs to the conotoxin T superfamily. Post-translationally, contains 2 disulfide bonds that can be either 'C1-C3, C2-C4' or 'C1-C4, C2-C3', since these disulfide connectivities have been observed for conotoxins with cysteine framework V (for examples, see AC P0DQQ7 and AC P81755). Expressed by the venom duct.

Its subcellular location is the secreted. The protein is Conotoxin Sr5.4 of Conus spurius (Alphabet cone).